The primary structure comprises 241 residues: MWMHKKILLKLSGESLKGESSYGIDPRTIKKIAWEIKEIKDLGVKIAIIVGAGNLWRGRTGEELGMDRSQADYMGMLGTIMNSLALQDALEQTNTITRVMTAFPVSSVAEPYIRRKAIRHLEKDRVVILGAGAGSPYFSTDTAAALRAAELNIDVILMAKNNIEGVYNKDPKKHQDAVLIKHMKHQQILSQRLAVMDITAASLCLENNIDILVFNMLKKGNIKKVVLKEGNIGTVISSKGE.

ATP-binding positions include K10–G13, G53, and R57. UMP is bound by residues D72 and A133–T140. Residues N161, Y167, and D170 each coordinate ATP.

It belongs to the UMP kinase family. In terms of assembly, homohexamer.

The protein localises to the cytoplasm. The enzyme catalyses UMP + ATP = UDP + ADP. It functions in the pathway pyrimidine metabolism; CTP biosynthesis via de novo pathway; UDP from UMP (UMPK route): step 1/1. Its activity is regulated as follows. Inhibited by UTP. Functionally, catalyzes the reversible phosphorylation of UMP to UDP. The protein is Uridylate kinase of Onion yellows phytoplasma (strain OY-M).